Here is a 356-residue protein sequence, read N- to C-terminus: S-adenosylmethionine:tRNA ribosyltransferase-isomerase (356 aa).

The protein belongs to the QueA family. In terms of assembly, monomer.

It localises to the cytoplasm. The catalysed reaction is 7-aminomethyl-7-carbaguanosine(34) in tRNA + S-adenosyl-L-methionine = epoxyqueuosine(34) in tRNA + adenine + L-methionine + 2 H(+). It participates in tRNA modification; tRNA-queuosine biosynthesis. In terms of biological role, transfers and isomerizes the ribose moiety from AdoMet to the 7-aminomethyl group of 7-deazaguanine (preQ1-tRNA) to give epoxyqueuosine (oQ-tRNA). In Escherichia coli O127:H6 (strain E2348/69 / EPEC), this protein is S-adenosylmethionine:tRNA ribosyltransferase-isomerase.